The sequence spans 142 residues: Sorting nexin-3 (142 aa).

The PX domain maps to 21–138 (NFLEIEVRNP…AAFVQDPNWD (118 aa)). Residues arginine 64, serine 66, lysine 90, arginine 95, and arginine 104 each coordinate a 1,2-diacyl-sn-glycero-3-phospho-(1D-myo-inositol-3-phosphate).

This sequence belongs to the sorting nexin family.

The protein resides in the cytoplasm. It is found in the golgi apparatus membrane. It localises to the prevacuolar compartment membrane. Functionally, required for retention of late Golgi membrane proteins. Component of the retrieval machinery that functions by direct interaction with the cytosolic tails of certain TGN membrane proteins during the sorting/budding process at the prevacuolar compartment. Binds phosphatidylinositol 3-phosphate (PtdIns(P3)). This is Sorting nexin-3 (snx-3) from Neurospora crassa (strain ATCC 24698 / 74-OR23-1A / CBS 708.71 / DSM 1257 / FGSC 987).